The following is a 419-amino-acid chain: Transcription regulator lscL (419 aa).

The segment at residues 12-35 is a DNA-binding region (zn(2)-C6 fungal-type); it reads RIRKVKCDEKKPCCQKCIDTGRTC.

It localises to the nucleus. In terms of biological role, transcription factor that may coregulate the expression of the gene cluster that mediates the biosynthesis of the lipopeptide antibiotics leucinostatins that show extensive biological activities, including antimalarial, antiviral, antibacterial, antifungal, and antitumor activities, as well as phytotoxic. The chain is Transcription regulator lscL from Purpureocillium lilacinum (Paecilomyces lilacinus).